A 234-amino-acid polypeptide reads, in one-letter code: Phosphoribosylformylglycinamidine synthase subunit PurQ (234 aa).

Residues 3 to 231 (AAVVVFPGSN…ALYLERRKDH (229 aa)) enclose the Glutamine amidotransferase type-1 domain. C87 acts as the Nucleophile in catalysis. Active-site residues include H200 and E202.

As to quaternary structure, part of the FGAM synthase complex composed of 1 PurL, 1 PurQ and 2 PurS subunits.

Its subcellular location is the cytoplasm. The enzyme catalyses N(2)-formyl-N(1)-(5-phospho-beta-D-ribosyl)glycinamide + L-glutamine + ATP + H2O = 2-formamido-N(1)-(5-O-phospho-beta-D-ribosyl)acetamidine + L-glutamate + ADP + phosphate + H(+). It catalyses the reaction L-glutamine + H2O = L-glutamate + NH4(+). Its pathway is purine metabolism; IMP biosynthesis via de novo pathway; 5-amino-1-(5-phospho-D-ribosyl)imidazole from N(2)-formyl-N(1)-(5-phospho-D-ribosyl)glycinamide: step 1/2. Its function is as follows. Part of the phosphoribosylformylglycinamidine synthase complex involved in the purines biosynthetic pathway. Catalyzes the ATP-dependent conversion of formylglycinamide ribonucleotide (FGAR) and glutamine to yield formylglycinamidine ribonucleotide (FGAM) and glutamate. The FGAM synthase complex is composed of three subunits. PurQ produces an ammonia molecule by converting glutamine to glutamate. PurL transfers the ammonia molecule to FGAR to form FGAM in an ATP-dependent manner. PurS interacts with PurQ and PurL and is thought to assist in the transfer of the ammonia molecule from PurQ to PurL. In Pseudothermotoga lettingae (strain ATCC BAA-301 / DSM 14385 / NBRC 107922 / TMO) (Thermotoga lettingae), this protein is Phosphoribosylformylglycinamidine synthase subunit PurQ.